Here is a 215-residue protein sequence, read N- to C-terminus: Pyridoxine/pyridoxamine 5'-phosphate oxidase (215 aa).

Residues 9–12 and Lys-69 each bind substrate; that span reads RRDY. Residues 64–69, 79–80, Lys-86, and Gln-108 each bind FMN; these read RILLLK and FT. Substrate-binding residues include Tyr-126, Arg-130, and Ser-134. FMN-binding positions include 143 to 144 and Trp-188; that span reads QS. 194-196 is a substrate binding site; the sequence is RLH. Arg-198 contributes to the FMN binding site.

It belongs to the pyridoxamine 5'-phosphate oxidase family. In terms of assembly, homodimer. Requires FMN as cofactor.

It catalyses the reaction pyridoxamine 5'-phosphate + O2 + H2O = pyridoxal 5'-phosphate + H2O2 + NH4(+). It carries out the reaction pyridoxine 5'-phosphate + O2 = pyridoxal 5'-phosphate + H2O2. It participates in cofactor metabolism; pyridoxal 5'-phosphate salvage; pyridoxal 5'-phosphate from pyridoxamine 5'-phosphate: step 1/1. It functions in the pathway cofactor metabolism; pyridoxal 5'-phosphate salvage; pyridoxal 5'-phosphate from pyridoxine 5'-phosphate: step 1/1. Catalyzes the oxidation of either pyridoxine 5'-phosphate (PNP) or pyridoxamine 5'-phosphate (PMP) into pyridoxal 5'-phosphate (PLP). The protein is Pyridoxine/pyridoxamine 5'-phosphate oxidase of Pseudomonas fluorescens (strain Pf0-1).